A 115-amino-acid chain; its full sequence is MTGKGQGFGFGLGKMKELAEAFKKAQQVQEGAKRLQEELEQMEIQGEAGGGLVKVIVSGNQEPKRVEISPDALAQGADLLSDLVTAAMKDAYIKSTATMRERMEDLTSGLELPGF.

Belongs to the YbaB/EbfC family. As to quaternary structure, homodimer.

The protein resides in the cytoplasm. The protein localises to the nucleoid. Its function is as follows. Binds to DNA and alters its conformation. May be involved in regulation of gene expression, nucleoid organization and DNA protection. The chain is Nucleoid-associated protein alr5067 from Nostoc sp. (strain PCC 7120 / SAG 25.82 / UTEX 2576).